The sequence spans 89 residues: Acylphosphatase (89 aa).

The Acylphosphatase-like domain occupies 4-89; it reads SRRFLVSGTV…EQPPEGFRVL (86 aa). Residues R19 and N37 contribute to the active site.

Belongs to the acylphosphatase family.

The enzyme catalyses an acyl phosphate + H2O = a carboxylate + phosphate + H(+). This is Acylphosphatase (acyP) from Alkalilimnicola ehrlichii (strain ATCC BAA-1101 / DSM 17681 / MLHE-1).